The primary structure comprises 88 residues: uncharacterized protein (88 aa).

A run of 2 helical transmembrane segments spans residues 13–33 and 62–82; these read FLAFLVSQLYFNFVELTGWGP and WFNIITVFLGVFTIIQIITGI.

The protein localises to the cell membrane. This is an uncharacterized protein from Bacillus subtilis (strain 168).